The chain runs to 104 residues: Urease subunit beta (104 aa).

It belongs to the urease beta subunit family. Heterotrimer of UreA (gamma), UreB (beta) and UreC (alpha) subunits. Three heterotrimers associate to form the active enzyme.

It is found in the cytoplasm. The enzyme catalyses urea + 2 H2O + H(+) = hydrogencarbonate + 2 NH4(+). It participates in nitrogen metabolism; urea degradation; CO(2) and NH(3) from urea (urease route): step 1/1. This Mycolicibacterium vanbaalenii (strain DSM 7251 / JCM 13017 / BCRC 16820 / KCTC 9966 / NRRL B-24157 / PYR-1) (Mycobacterium vanbaalenii) protein is Urease subunit beta.